A 176-amino-acid chain; its full sequence is Transcriptional repressor NrdR (176 aa).

A zinc finger lies at 3–34 (CPYCGSLETQVKDSRPTDDASAIRRRRVCPDC). An ATP-cone domain is found at 49–139 (LTVLKKSGRR…VYRNFREARD (91 aa)). The tract at residues 147–176 (LDGAAQPEAPSKDDGGTDEPPAKTRAPTRA) is disordered.

It belongs to the NrdR family. The cofactor is Zn(2+).

Its function is as follows. Negatively regulates transcription of bacterial ribonucleotide reductase nrd genes and operons by binding to NrdR-boxes. The protein is Transcriptional repressor NrdR of Methylocella silvestris (strain DSM 15510 / CIP 108128 / LMG 27833 / NCIMB 13906 / BL2).